Consider the following 675-residue polypeptide: Acetyl-coenzyme A synthetase 2 (675 aa).

CoA contacts are provided by residues 206–209 (RGGK) and Thr325. ATP is bound by residues 401–403 (GEP), 425–430 (DTMWQT), Asp516, and Arg531. Ser539 is a CoA binding site. Residue Arg542 coordinates ATP. Arg604 is a CoA binding site.

This sequence belongs to the ATP-dependent AMP-binding enzyme family.

It catalyses the reaction acetate + ATP + CoA = acetyl-CoA + AMP + diphosphate. This Zygosaccharomyces bailii protein is Acetyl-coenzyme A synthetase 2 (ACS2).